Reading from the N-terminus, the 1128-residue chain is Nck-associated protein 1 (1128 aa).

Residues 640-665 (AVNKKSKKQTGKKGEPEREKPGVESM) are disordered. The segment covering 651 to 665 (KKGEPEREKPGVESM) has biased composition (basic and acidic residues). A helical transmembrane segment spans residues 995–1015 (IACLLMVFVAVSMPTLASNVM).

This sequence belongs to the HEM-1/HEM-2 family.

It is found in the cell membrane. The protein localises to the cell projection. Its subcellular location is the lamellipodium membrane. In terms of biological role, part of the WAVE complex that regulates lamellipodia formation. The WAVE complex regulates actin filament reorganization via its interaction with the Arp2/3 complex. Actin remodeling activity is regulated by RAC1. Plays a role in neural tube closure. The sequence is that of Nck-associated protein 1 (nckap1) from Danio rerio (Zebrafish).